Here is a 405-residue protein sequence, read N- to C-terminus: Alpha-N-acetylgalactosaminidase (405 aa).

3 disulfide bridges follow: Cys-21/Cys-63, Cys-25/Cys-32, and Cys-111/Cys-142. Residues Asp-61 to Asp-62 and Lys-138 each bind substrate. Catalysis depends on Asp-140, which acts as the Nucleophile. The N-linked (GlcNAc...) asparagine glycan is linked to Asn-161. Cys-171 and Cys-193 form a disulfide bridge. Ser-172 is a binding site for substrate. Asn-185 carries an N-linked (GlcNAc...) asparagine glycan. Substrate is bound by residues Arg-197 and Asp-201. Asp-201 acts as the Proton donor in catalysis. Asn-369 is a glycosylation site (N-linked (GlcNAc...) asparagine).

It belongs to the glycosyl hydrolase 27 family. Homodimer.

The protein localises to the lysosome. The catalysed reaction is Cleavage of non-reducing alpha-(1-&gt;3)-N-acetylgalactosamine residues from human blood group A and AB mucin glycoproteins, Forssman hapten and blood group A lacto series glycolipids.. The enzyme catalyses a neolactoside IV(3)-alpha-GalNAc,IV(2)-alpha-Fuc-nLc4Cer(d18:1(4E)) + H2O = a neolactoside IV(2)-alpha-Fuc-nLc4Cer(d18:1(4E)) + N-acetyl-alpha-D-galactosamine. It carries out the reaction a neolactoside IV(3)-alpha-GalNAc,IV(2)-alpha-Fuc-nLc4Cer(d18:0) + H2O = a neolactoside IV(2)-alpha-Fuc-nLc4Cer(d18:0) + N-acetyl-alpha-D-galactosamine. It catalyses the reaction a globoside IV3GalNAc-Gb4Cer + H2O = N-acetyl-alpha-D-galactosamine + a globoside Gb4Cer. Functionally, removes terminal alpha-N-acetylgalactosamine residues from glycolipids and glycopeptides. Required for the breakdown of glycolipids. The protein is Alpha-N-acetylgalactosaminidase (NAGA) of Gallus gallus (Chicken).